The chain runs to 177 residues: MGASREKKQQIVAEFKDKLSKAQTVIFTSFSGLTVEDETVLRRKFKEANSEYKVYKNTLMTIAARELGYGDDLIKYFEGPTSVAFGYEDPVAPAKILTEFMKDHKGLELKVGIVNGKIVSPQEIEALAKLPSREELLAKALGSMKAPITNLVFVLSGTLRSLVYALNAIKEKKQAEA.

The protein belongs to the universal ribosomal protein uL10 family. As to quaternary structure, part of the ribosomal stalk of the 50S ribosomal subunit. The N-terminus interacts with L11 and the large rRNA to form the base of the stalk. The C-terminus forms an elongated spine to which L12 dimers bind in a sequential fashion forming a multimeric L10(L12)X complex.

In terms of biological role, forms part of the ribosomal stalk, playing a central role in the interaction of the ribosome with GTP-bound translation factors. This chain is Large ribosomal subunit protein uL10, found in Caldanaerobacter subterraneus subsp. tengcongensis (strain DSM 15242 / JCM 11007 / NBRC 100824 / MB4) (Thermoanaerobacter tengcongensis).